Here is a 422-residue protein sequence, read N- to C-terminus: MACARPLISVYSEKGESSGKNVTLPAVFKAPIRPDIVNFVHTNLRKNNRQPYAVSELAGHQTSAESWGTGRAVARIPRVRGGGTHRSGQGAFGNMCRGGRMFAPTKTWRRWHRRVNTTQKRYAICSALAASALPALVMSKGHRIEEVPELPLVVEDKVEGYKKTKEAVLLLKKLKAWNDIKKVYASQRMRAGKGKMRNRRRIQRRGPCIIYNEDNGIIKAFRNIPGITLLNVSKLNILKLAPGGHVGRFCIWTESAFRKLDELYGTWRKAASLKSNYNLPMHKMLNTDLSRILKSPEIQRALRAPRKKIHRRVLKKNPLKNLRIMLKLNPYAKTMRRNTILRQARNHKIRMDKAAAALEAKSDQKGVQGKKPVVGNKEKKAVGDKKLKKPVVGKKAAGTKKPAAEKKPTEKKPTSEEKKAAA.

The residue at position 2 (Ala-2) is an N-acetylalanine. The residue at position 14 (Lys-14) is an N6-acetyllysine. Arg-97 is subject to Omega-N-methylarginine. Lys-106 carries the post-translational modification N6-acetyllysine. Lys-239 participates in a covalent cross-link: Glycyl lysine isopeptide (Lys-Gly) (interchain with G-Cter in SUMO2). Lys-259 bears the N6-acetyllysine mark. A Phosphothreonine modification is found at Thr-266. Residues Ser-290 and Ser-295 each carry the phosphoserine modification. The residue at position 300 (Arg-300) is a Citrulline. A Glycyl lysine isopeptide (Lys-Gly) (interchain with G-Cter in SUMO2) cross-link involves residue Lys-327. Residues Lys-333 and Lys-353 each carry the N6-acetyllysine modification. The disordered stretch occupies residues 359–422 (EAKSDQKGVQ…PTSEEKKAAA (64 aa)). Lys-361 carries the post-translational modification N6-acetyllysine; alternate. Lys-361 is covalently cross-linked (Glycyl lysine isopeptide (Lys-Gly) (interchain with G-Cter in SUMO1); alternate). Ser-362 carries the post-translational modification Phosphoserine. Basic and acidic residues-rich tracts occupy residues 376–385 (NKEKKAVGDK) and 402–422 (PAAE…KAAA).

The protein belongs to the universal ribosomal protein uL4 family. As to quaternary structure, component of the large ribosomal subunit. May bind IPO9 with low affinity. Interacts with RBM3. Post-translationally, citrullinated by PADI4.

It localises to the cytoplasm. Its function is as follows. Component of the large ribosomal subunit. The ribosome is a large ribonucleoprotein complex responsible for the synthesis of proteins in the cell. The polypeptide is Large ribosomal subunit protein uL4 (RPL4) (Bos taurus (Bovine)).